A 206-amino-acid polypeptide reads, in one-letter code: 2,3-bisphosphoglycerate-dependent phosphoglycerate mutase (206 aa).

Substrate contacts are provided by residues 9–16 (RHGQSEWN), 22–23 (TG), R61, 88–91 (ERDY), K99, 115–116 (RR), and 159–160 (GN). H10 serves as the catalytic Tele-phosphohistidine intermediate. E88 (proton donor/acceptor) is an active-site residue.

Belongs to the phosphoglycerate mutase family. BPG-dependent PGAM subfamily. As to quaternary structure, homodimer.

It catalyses the reaction (2R)-2-phosphoglycerate = (2R)-3-phosphoglycerate. It participates in carbohydrate degradation; glycolysis; pyruvate from D-glyceraldehyde 3-phosphate: step 3/5. In terms of biological role, catalyzes the interconversion of 2-phosphoglycerate and 3-phosphoglycerate. The polypeptide is 2,3-bisphosphoglycerate-dependent phosphoglycerate mutase (Bartonella quintana (strain Toulouse) (Rochalimaea quintana)).